Consider the following 249-residue polypeptide: tRNA pseudouridine synthase A (249 aa).

The active-site Nucleophile is the Asp53. Substrate is bound at residue Tyr111.

It belongs to the tRNA pseudouridine synthase TruA family. As to quaternary structure, homodimer.

It carries out the reaction uridine(38/39/40) in tRNA = pseudouridine(38/39/40) in tRNA. Its function is as follows. Formation of pseudouridine at positions 38, 39 and 40 in the anticodon stem and loop of transfer RNAs. The protein is tRNA pseudouridine synthase A of Streptococcus pneumoniae serotype 2 (strain D39 / NCTC 7466).